Consider the following 141-residue polypeptide: Large ribosomal subunit protein uL13 (141 aa).

It belongs to the universal ribosomal protein uL13 family. As to quaternary structure, part of the 50S ribosomal subunit.

This protein is one of the early assembly proteins of the 50S ribosomal subunit, although it is not seen to bind rRNA by itself. It is important during the early stages of 50S assembly. In Deinococcus deserti (strain DSM 17065 / CIP 109153 / LMG 22923 / VCD115), this protein is Large ribosomal subunit protein uL13.